A 149-amino-acid polypeptide reads, in one-letter code: MAVTIDPKTFYANPLPGKPFYVRFEVPSDVAEKALEILSIARQTGKIKKGTNETTKAVERGLAKLVLIAEDVDPPEVVAHLPLLCEEKKVPYVYVPSKEKLGKAAGINVAAAAAVVIEAGQAAGELEALVNKINEIRAKHGLNAIPVRR.

The protein belongs to the eukaryotic ribosomal protein eL8 family. As to quaternary structure, part of the 50S ribosomal subunit. Probably part of the RNase P complex.

Its subcellular location is the cytoplasm. Its function is as follows. Multifunctional RNA-binding protein that recognizes the K-turn motif in ribosomal RNA, the RNA component of RNase P, box H/ACA, box C/D and box C'/D' sRNAs. The chain is Large ribosomal subunit protein eL8 from Pyrobaculum calidifontis (strain DSM 21063 / JCM 11548 / VA1).